Here is a 228-residue protein sequence, read N- to C-terminus: MCGAIVLLLLVGTSPAPVEGLRCRTGEGPSADDVKRIVRTCMNKITNAGTMGEWGQRDRNGEEQQMMRDYGRSHRRRKRQYYGGQTSGSSSSGSAGEHSYNGRASPQYGEAGQGGNGTRSGGNSSSSSSSTIERDRACLMQCFFEEMKATNADGFPEKHKVLHVITKDIREHELREFYVDSIQECFHMLGLDNRLKDKCDYSMRFVTCLSDRFETNCDDWESVTSAMF.

Residues 1–20 form the signal peptide; the sequence is MCGAIVLLLLVGTSPAPVEG. A disordered region spans residues 50 to 131; the sequence is TMGEWGQRDR…GNSSSSSSST (82 aa). A compositionally biased stretch (basic and acidic residues) spans 55–72; sequence GQRDRNGEEQQMMRDYGR. Low complexity predominate over residues 83–99; it reads GGQTSGSSSSGSAGEHS. Residues 111 to 120 show a composition bias toward gly residues; the sequence is AGQGGNGTRS. Residues 121–131 show a composition bias toward low complexity; that stretch reads GGNSSSSSSST. Intrachain disulfides connect cysteine 138/cysteine 199 and cysteine 185/cysteine 208.

Belongs to the PBP/GOBP family.

The protein localises to the secreted. Present in the aqueous fluid surrounding olfactory sensory dendrites and are thought to aid in the capture and transport of hydrophobic odorants into and through this fluid. The chain is General odorant-binding protein 71 (Obp71) from Anopheles gambiae (African malaria mosquito).